Here is a 308-residue protein sequence, read N- to C-terminus: tRNA pseudouridine synthase B (308 aa).

Asp-44 serves as the catalytic Nucleophile.

This sequence belongs to the pseudouridine synthase TruB family. Type 1 subfamily.

The enzyme catalyses uridine(55) in tRNA = pseudouridine(55) in tRNA. In terms of biological role, responsible for synthesis of pseudouridine from uracil-55 in the psi GC loop of transfer RNAs. This Nitratidesulfovibrio vulgaris (strain DSM 19637 / Miyazaki F) (Desulfovibrio vulgaris) protein is tRNA pseudouridine synthase B.